A 93-amino-acid chain; its full sequence is Co-chaperonin GroES (93 aa).

Belongs to the GroES chaperonin family. Heptamer of 7 subunits arranged in a ring. Interacts with the chaperonin GroEL.

The protein localises to the cytoplasm. Functionally, together with the chaperonin GroEL, plays an essential role in assisting protein folding. The GroEL-GroES system forms a nano-cage that allows encapsulation of the non-native substrate proteins and provides a physical environment optimized to promote and accelerate protein folding. GroES binds to the apical surface of the GroEL ring, thereby capping the opening of the GroEL channel. This is Co-chaperonin GroES from Streptococcus constellatus.